The following is a 999-amino-acid chain: Hypoxia up-regulated protein 1 (999 aa).

Residues 1–32 form the signal peptide; it reads MAATVRRQRPRRLLCWALVAVLLADLLALSDT. N-linked (GlcNAc...) asparagine glycosylation is found at asparagine 155, asparagine 222, and asparagine 515. Phosphoserine is present on serine 567. Positions 567 to 694 are disordered; the sequence is SPEEESTLTK…KKPKPARKQK (128 aa). Over residues 574 to 583 the composition is skewed to polar residues; it reads LTKLGNTISS. A glycan (N-linked (GlcNAc...) asparagine) is linked at asparagine 596. Basic and acidic residues-rich tracts occupy residues 611–626 and 641–668; these read GSKDEPAEQGELKEEA and PKGDAAREGEKPDEKESGDKPEAQKPNE. Over residues 669-680 the composition is skewed to low complexity; the sequence is KGQAGPEGAAPA. Residues asparagine 830, asparagine 862, and asparagine 869 are each glycosylated (N-linked (GlcNAc...) asparagine). At lysine 883 the chain carries N6-acetyllysine. The segment at 909 to 999 is disordered; the sequence is AKFTKPRPRP…QKRPSKNDEL (91 aa). 2 N-linked (GlcNAc...) asparagine glycosylation sites follow: asparagine 922 and asparagine 931. Residues 949-962 are compositionally biased toward basic and acidic residues; sequence EEAKPILEPDKEET. The Prevents secretion from ER motif lies at 996 to 999; sequence NDEL.

Belongs to the heat shock protein 70 family. In terms of assembly, part of a large chaperone multiprotein complex comprising DNAJB11, HSP90B1, HSPA5, HYOU, PDIA2, PDIA4, PDIA6, PPIB, SDF2L1, UGGT1 and very small amounts of ERP29, but not, or at very low levels, CALR nor CANX.

It is found in the endoplasmic reticulum lumen. Has a pivotal role in cytoprotective cellular mechanisms triggered by oxygen deprivation. Promotes HSPA5/BiP-mediated ATP nucleotide exchange and thereby activates the unfolded protein response (UPR) pathway in the presence of endoplasmic reticulum stress. May play a role as a molecular chaperone and participate in protein folding. This chain is Hypoxia up-regulated protein 1 (Hyou1), found in Mus musculus (Mouse).